Here is a 472-residue protein sequence, read N- to C-terminus: Serine/threonine-protein kinase ULK3 (472 aa).

The Protein kinase domain maps to 14-270; the sequence is FILTERLGSG…FQDFFAHPWV (257 aa). ATP-binding positions include 20 to 28 and Lys-44; that span reads LGSGTYATV. The active-site Proton acceptor is the Asp-137. Ser-176 carries the phosphoserine modification. One can recognise an MIT 1 domain in the interval 280–348; it reads SLGRATALVV…SRAEELKAIV (69 aa). A phosphoserine; by autocatalysis mark is found at Ser-300, Ser-350, Ser-384, and Ser-464. In terms of domain architecture, MIT 2 spans 375–444; the sequence is RLLAALEVAS…ARAEYLKEQV (70 aa).

It belongs to the protein kinase superfamily. Ser/Thr protein kinase family. APG1/unc-51/ULK1 subfamily. As to quaternary structure, interacts (via protein kinase domain) with SUFU. Autophosphorylated. Autophosphorylation is blocked by interaction with SUFU. Widely expressed. Highest levels observed in fetal brain. In adult tissues, high levels in brain, liver and kidney, moderate levels in testis and adrenal gland and low levels in heart, lung, stomach, thymus, prostate and placenta. In the brain, highest expression in the hippocampus, high levels also detected in the cerebellum, olfactory bulb and optic nerve. In the central nervous system, lowest levels in the spinal cord.

Its subcellular location is the cytoplasm. The enzyme catalyses L-seryl-[protein] + ATP = O-phospho-L-seryl-[protein] + ADP + H(+). It carries out the reaction L-threonyl-[protein] + ATP = O-phospho-L-threonyl-[protein] + ADP + H(+). Functionally, serine/threonine protein kinase that acts as a regulator of Sonic hedgehog (SHH) signaling and autophagy. Acts as a negative regulator of SHH signaling in the absence of SHH ligand: interacts with SUFU, thereby inactivating the protein kinase activity and preventing phosphorylation of GLI proteins (GLI1, GLI2 and/or GLI3). Positively regulates SHH signaling in the presence of SHH: dissociates from SUFU, autophosphorylates and mediates phosphorylation of GLI2, activating it and promoting its nuclear translocation. Phosphorylates in vitro GLI2, as well as GLI1 and GLI3, although less efficiently. Also acts as a regulator of autophagy: following cellular senescence, able to induce autophagy. The chain is Serine/threonine-protein kinase ULK3 (ULK3) from Homo sapiens (Human).